Consider the following 712-residue polypeptide: Voltage-gated chloride channel TMC4 (712 aa).

Positions M1–V39 are disordered. At M1–R168 the chain is on the extracellular side. An N-linked (GlcNAc...) asparagine glycan is attached at N107. The chain crosses the membrane as a helical span at residues F169–T189. The Cytoplasmic portion of the chain corresponds to W190 to R249. A helical membrane pass occupies residues L250–L270. Residues H271–R348 are Extracellular-facing. The helical transmembrane segment at V349–A369 threads the bilayer. The Cytoplasmic segment spans residues T370 to Y394. Residues L395–A415 form a helical membrane-spanning segment. The Extracellular segment spans residues P416–Q425. The helical transmembrane segment at I426–F446 threads the bilayer. The Cytoplasmic segment spans residues S447 to E483. A helical membrane pass occupies residues M484–F504. The Extracellular segment spans residues P505–V542. A helical membrane pass occupies residues W543–Y565. The Cytoplasmic segment spans residues L566 to P592. A helical membrane pass occupies residues L593–I613. At P614–A654 the chain is on the extracellular side. A helical membrane pass occupies residues F655–Y677. Over G678–L712 the chain is Cytoplasmic.

Belongs to the TMC family.

It is found in the membrane. The enzyme catalyses chloride(in) = chloride(out). Functionally, voltage-gated chloride channel involved in high-concentration salt taste sensation. Depolarization induced by high NaCl concentration may trigger the activation of TMC4-mediated chloride influx into taste bud cells, helping the return to resting potential. Also allows permeation of organic anions including gluconate, but their current amplitudes at positive potentials are less than that of chloride. Involved in pH and temperature-dependent modulation of salty taste. The polypeptide is Voltage-gated chloride channel TMC4 (Homo sapiens (Human)).